Here is a 384-residue protein sequence, read N- to C-terminus: UPF0496 protein At3g28310/At3g28320 (384 aa).

Residues 184–215 (QESLFDRVTETKERIAKEIEEVQKRISNVNTA) are a coiled coil. 2 helical membrane-spanning segments follow: residues 217-237 (IVSH…CIAL) and 242-262 (VGAP…VQWV). The stretch at 264-361 (VNYVLNNSLE…TTKITEVCET (98 aa)) forms a coiled coil.

The protein belongs to the UPF0496 family.

Its subcellular location is the membrane. The polypeptide is UPF0496 protein At3g28310/At3g28320 (Arabidopsis thaliana (Mouse-ear cress)).